A 246-amino-acid polypeptide reads, in one-letter code: UDP-N-acetyl-D-mannosaminuronic acid transferase (246 aa).

It belongs to the glycosyltransferase 26 family.

It carries out the reaction UDP-N-acetyl-alpha-D-mannosaminouronate + N-acetyl-alpha-D-glucosaminyl-di-trans,octa-cis-undecaprenyl diphosphate = beta-D-ManNAcA-(1-&gt;4)-alpha-D-GlcNAc-di-trans,octa-cis-undecaprenyl diphosphate + UDP + H(+). Its pathway is bacterial outer membrane biogenesis; enterobacterial common antigen biosynthesis. Functionally, catalyzes the synthesis of Und-PP-GlcNAc-ManNAcA (Lipid II), the second lipid-linked intermediate involved in enterobacterial common antigen (ECA) synthesis. This is UDP-N-acetyl-D-mannosaminuronic acid transferase from Escherichia coli O7:K1 (strain IAI39 / ExPEC).